We begin with the raw amino-acid sequence, 316 residues long: BTB/POZ domain-containing adapter for CUL3-mediated RhoA degradation protein 2 (316 aa).

Residues 28 to 96 form the BTB domain; sequence KYVQLNVGGS…LRDDTITLPQ (69 aa). A compositionally biased stretch (polar residues) spans 268–279; the sequence is EATSRSRSQASP. The interval 268–288 is disordered; that stretch reads EATSRSRSQASPSEDEDTFEL. Ser278 carries the phosphoserine modification. The residue at position 280 (Ser280) is a Phosphoserine; by CK2.

This sequence belongs to the BACURD family. As to quaternary structure, component of the BCR(TNFAIP1) E3 ubiquitin ligase complex, at least composed of CUL3, TNFAIP1/BACURD2 and RBX1. Interacts with RHOA; with a preference for RhoA-GDP. Interacts with RHOB. Interacts with PCNA. Interacts with CSNK2B. In terms of processing, phosphorylation at Ser-280 by CK2 facilitates the nucleus localization and increases interaction with PCNA.

It localises to the cytoplasm. The protein resides in the nucleus. The protein localises to the endosome. Its pathway is protein modification; protein ubiquitination. Substrate-specific adapter of a BCR (BTB-CUL3-RBX1) E3 ubiquitin-protein ligase complex involved in regulation of cytoskeleton structure. The BCR(TNFAIP1) E3 ubiquitin ligase complex mediates the ubiquitination of RHOA, leading to its degradation by the proteasome, thereby regulating the actin cytoskeleton and cell migration. Its interaction with RHOB may regulate apoptosis. May enhance the PCNA-dependent DNA polymerase delta activity. The chain is BTB/POZ domain-containing adapter for CUL3-mediated RhoA degradation protein 2 (Tnfaip1) from Mus musculus (Mouse).